The sequence spans 603 residues: Sulfoacetaldehyde acetyltransferase (603 aa).

The protein belongs to the TPP enzyme family. Homodimer or homotetramer. Requires Mg(2+) as cofactor. Thiamine diphosphate is required as a cofactor.

The protein resides in the cytoplasm. It carries out the reaction acetyl phosphate + sulfite + H(+) = sulfoacetaldehyde + phosphate. The protein operates within organosulfur degradation; taurine degradation via aerobic pathway; acetyl phosphate and sulfite from taurine: step 2/2. This chain is Sulfoacetaldehyde acetyltransferase (xsc), found in Alcaligenes xylosoxydans xylosoxydans (Achromobacter xylosoxidans).